The following is a 736-amino-acid chain: MSEHDPAAGLQPLDIDALVEARHPDPFSQLGLHHTDAGPVVRALLPNAAHVSVISRADGALLGELEQLRPGLFAGRITSAAPYRLRIDWHGVVQEIEDTYSFGPVLGDEPLGRLAGGDPYAVLECLGARPMEVDGVPGVRFAVWAPNARRVSVVGDFNAWDGRRHPMRLRHQAGVWELFVPRVGPGTRYKYELLSRDGHPLPLKADPCAMQTEKPPGTASIVAHVDEVEQFPWSDHEWIQSRAGKQTARSPISIYEVHAESWLRVAEEGQRGLDWEELAERMIPYVKSMGFTHVEFMPIAEHPFGGSWGYQPLGQFAPSARFGKPEQFARFVDKAHEAGLGVILDWVPAHFPNDAHGLIDFDGTPLYEHADPREGYHQDWNTMIYNLGRNEVSAFLIASGLAWLKRYHVDGLRVDAVASMLYRDYSRAADQWVPNIYGGRENLESIAFLKRLNHEVGYVPGVPGAITIAEESTAWPGVTARVEDGGLGFQFKWNMGWMHDTLHYMEEDPVYRQYHHHNMTFGMVYAYSERFVLPLSHDEVVHGKGSLLGKMPGDRWQKFANLRAYFGFMWTHPGKKLLFMGGEFGQLAEFNHDASPHWHLLDDSNHHGVQMLVRDLNRLYSDEPALYLLDCEPGGFEWLIGDDSGNSVFAYRRTDGAGRELVVVCNMTPVPRLGYRIGMPRGGRWVEVLNTDAGVYGGSNMGNGGLIHTDSQSSHGWPHSAALTLPPLATIVLRAD.

The active-site Nucleophile is aspartate 415. The active-site Proton donor is glutamate 470.

This sequence belongs to the glycosyl hydrolase 13 family. GlgB subfamily. Monomer.

It catalyses the reaction Transfers a segment of a (1-&gt;4)-alpha-D-glucan chain to a primary hydroxy group in a similar glucan chain.. It functions in the pathway glycan biosynthesis; glycogen biosynthesis. Its function is as follows. Catalyzes the formation of the alpha-1,6-glucosidic linkages in glycogen by scission of a 1,4-alpha-linked oligosaccharide from growing alpha-1,4-glucan chains and the subsequent attachment of the oligosaccharide to the alpha-1,6 position. The chain is 1,4-alpha-glucan branching enzyme GlgB from Paraburkholderia xenovorans (strain LB400).